Reading from the N-terminus, the 64-residue chain is Chassatide C7 (64 aa).

A propeptide spans 1–35 (VLVASLVMLEAQSSDTIQVPDWGKRLLMNHDSNRV) (removed in mature form). Cystine bridges form between Cys-39–Cys-55, Cys-43–Cys-57, and Cys-48–Cys-62.

In terms of tissue distribution, expressed in fruit, pedicel, root and stem but not in leaf (at protein level).

Functionally, probably participates in a plant defense mechanism. Active against E.coli ATTC25922 but not against S.aureus ATCC 12600 or S.epidermidis ATCC 14990. Has cytotoxic and hemolytic activity. The chain is Chassatide C7 from Chassalia chartacea (Chassalia curviflora).